The primary structure comprises 295 residues: Dipeptide transport system permease protein DppC (295 aa).

Transmembrane regions (helical) follow at residues 27 to 47, 97 to 117, 132 to 152, 156 to 178, 202 to 222, 226 to 246, and 262 to 282; these read ALIG…APYI, VFAG…LGLI, LIDI…VSIL, LANA…TRAA, MFIV…TMGI, ILEL…TPEL, and WLVT…NLMG. Residues 93–282 enclose the ABC transmembrane type-1 domain; the sequence is TRISVFAGFI…SLVLAFNLMG (190 aa).

It belongs to the binding-protein-dependent transport system permease family. OppBC subfamily.

The protein localises to the cell inner membrane. Its function is as follows. Part of the ABC transporter DppBCDF involved in dipeptide transport. Responsible for the translocation of the substrate across the membrane. The polypeptide is Dipeptide transport system permease protein DppC (dppC) (Haemophilus influenzae (strain ATCC 51907 / DSM 11121 / KW20 / Rd)).